Reading from the N-terminus, the 188-residue chain is Small acidic protein (188 aa).

A disordered region spans residues 1-188 (MSAREERYQR…KMLFVKSTGS (188 aa)). Basic and acidic residues predominate over residues 49 to 82 (GKKEHTGRLVIGDHKSTSHFRSGVEDKKISDQLE). Over residues 83 to 95 (HQYQQSMDSSMSG) the composition is skewed to polar residues. A compositionally biased stretch (acidic residues) spans 130–152 (SESSNEVSSEEESESESVSEEET). Positions 153–176 (AADKQKPTKPNEKDSFPDSRDGKS) are enriched in basic and acidic residues.

Belongs to the SMAP family.

The chain is Small acidic protein (smap) from Xenopus laevis (African clawed frog).